A 638-amino-acid polypeptide reads, in one-letter code: Chaperone protein HtpG (638 aa).

Positions 1 to 346 (MSQQETHGFQ…SNDLPLNVSR (346 aa)) are a; substrate-binding. The segment at 347–563 (EILQDNKVTT…EGEMSTQMIK (217 aa)) is b. Residues 564–638 (LMQAAGQDVP…MNQMLLASVK (75 aa)) form a c region.

Belongs to the heat shock protein 90 family. Homodimer.

It is found in the cytoplasm. In terms of biological role, molecular chaperone. Has ATPase activity. In Shewanella pealeana (strain ATCC 700345 / ANG-SQ1), this protein is Chaperone protein HtpG.